The sequence spans 161 residues: Nucleotide-binding protein ABO_0048 (161 aa).

The protein belongs to the YajQ family.

Functionally, nucleotide-binding protein. This Alcanivorax borkumensis (strain ATCC 700651 / DSM 11573 / NCIMB 13689 / SK2) protein is Nucleotide-binding protein ABO_0048.